The chain runs to 194 residues: Ras-related protein Rab-22A (194 aa).

GTP is bound at residue 12-20 (GDTGVGKSS). Positions 34–42 (INPTIGASF) match the Effector region motif. GTP-binding positions include 60-64 (DTAGQ), 118-121 (NKCD), and 148-150 (SAK). The disordered stretch occupies residues 170–194 (DANPASGGKGFKLRRQPSEPKRSCC). Basic and acidic residues predominate over residues 185–194 (QPSEPKRSCC). 2 S-geranylgeranyl cysteine lipidation sites follow: Cys-193 and Cys-194.

It belongs to the small GTPase superfamily. Rab family. In terms of assembly, binds EEA1. Interacts (in its GTP-bound form) with RINL. Interacts directly with ZFYVE20. Interacts (in its GTP-bound form) with RABGEF1. In terms of tissue distribution, detected in brain and heart, and at lower levels in lung and spleen.

It is found in the endosome membrane. The protein localises to the cell membrane. Its subcellular location is the early endosome. The protein resides in the late endosome. It localises to the cell projection. It is found in the ruffle. The protein localises to the cytoplasmic vesicle. Its subcellular location is the phagosome. The protein resides in the phagosome membrane. Plays a role in endocytosis and intracellular protein transport. Mediates trafficking of TF from early endosomes to recycling endosomes. Required for NGF-mediated endocytosis of NTRK1, and subsequent neurite outgrowth. Binds GTP and GDP and has low GTPase activity. Alternates between a GTP-bound active form and a GDP-bound inactive form. This is Ras-related protein Rab-22A (Rab22a) from Mus musculus (Mouse).